Consider the following 219-residue polypeptide: Small ribosomal subunit protein uS3 (219 aa).

The 69-residue stretch at I38–K106 folds into the KH type-2 domain.

It belongs to the universal ribosomal protein uS3 family. As to quaternary structure, part of the 30S ribosomal subunit. Forms a tight complex with proteins S10 and S14.

Binds the lower part of the 30S subunit head. Binds mRNA in the 70S ribosome, positioning it for translation. This is Small ribosomal subunit protein uS3 from Bacillus thuringiensis (strain Al Hakam).